Consider the following 453-residue polypeptide: Chromosomal replication initiator protein DnaA (453 aa).

Residues 1 to 73 (MELSPQDLWT…ADVVEEILGY (73 aa)) are domain I, interacts with DnaA modulators. The tract at residues 73–110 (YSIDIQLTSTQGENIAIVGETQVSAYYPTLSGEHPKPI) is domain II. A domain III, AAA+ region region spans residues 111–327 (KLNPKYTFSR…GALIRAITYI (217 aa)). Positions 155, 157, 158, and 159 each coordinate ATP. Residues 328 to 453 (SISGLSMTVE…HLASRTQKTT (126 aa)) are domain IV, binds dsDNA.

The protein belongs to the DnaA family. In terms of assembly, oligomerizes as a right-handed, spiral filament on DNA at oriC.

It localises to the cytoplasm. In terms of biological role, plays an essential role in the initiation and regulation of chromosomal replication. ATP-DnaA binds to the origin of replication (oriC) to initiate formation of the DNA replication initiation complex once per cell cycle. Binds the DnaA box (a 9 base pair repeat at the origin) and separates the double-stranded (ds)DNA. Forms a right-handed helical filament on oriC DNA; dsDNA binds to the exterior of the filament while single-stranded (ss)DNA is stabiized in the filament's interior. The ATP-DnaA-oriC complex binds and stabilizes one strand of the AT-rich DNA unwinding element (DUE), permitting loading of DNA polymerase. After initiation quickly degrades to an ADP-DnaA complex that is not apt for DNA replication. Binds acidic phospholipids. This is Chromosomal replication initiator protein DnaA from Gloeothece citriformis (strain PCC 7424) (Cyanothece sp. (strain PCC 7424)).